The primary structure comprises 199 residues: Recombination protein RecR (199 aa).

The segment at 57–72 (CRQCRVLTEEPVCGLC) adopts a C4-type zinc-finger fold. Residues 80–175 (SLLCVVEGPA…RTTRIAHGVP (96 aa)) form the Toprim domain.

This sequence belongs to the RecR family.

In terms of biological role, may play a role in DNA repair. It seems to be involved in an RecBC-independent recombinational process of DNA repair. It may act with RecF and RecO. In Alkalilimnicola ehrlichii (strain ATCC BAA-1101 / DSM 17681 / MLHE-1), this protein is Recombination protein RecR.